The chain runs to 575 residues: Sodium/hydrogen exchanger 8 (575 aa).

The next 11 helical transmembrane spans lie at 54-74 (MTIFFSLLVLAICIILVHLLI), 78-98 (LHFLPESVAVVSLGILMGAVI), 117-137 (PNMFFLLLLPPIIFESGYSLH), 150-170 (LFAVFGTAISAFVVGGGIYFL), 185-205 (FAFGSLISAVDPVATIAIFNA), 255-275 (LGYFLKMFFGSAALGTLTGLI), 305-325 (GLAEGISLSGIMAILFSGIVM), 348-368 (VAFLCETCVFAFLGLSIFSFP), 373-393 (ISFVIWCIVLVLFGRAVNIFP), 411-431 (MFIMWFSGLRGAIPYALSLHL), and 445-465 (TTIIIVLFTILLLGGSTMPLI). Thr-504 bears the Phosphothreonine mark. Phosphoserine is present on residues Ser-565 and Ser-567.

The protein belongs to the monovalent cation:proton antiporter 1 (CPA1) transporter (TC 2.A.36) family. As to expression, intestine and kidneys.

The protein localises to the golgi apparatus membrane. The protein resides in the golgi apparatus. It is found in the trans-Golgi network membrane. It localises to the endosome. Its subcellular location is the multivesicular body membrane. The protein localises to the apical cell membrane. The protein resides in the cytoplasmic vesicle. It is found in the secretory vesicle. It localises to the acrosome. The catalysed reaction is Na(+)(in) + H(+)(out) = Na(+)(out) + H(+)(in). Expression and activity are regulated by acid media by increasing the rate of trafficking to the apical membrane. Inhibited by HOE694 and S3226. Functionally, na(+)/H(+) antiporter. Mediates the electoneutral exchange of intracellular H(+) ions for extracellular Na(+) in 1:1 stoichiometry. Acts as an Na(+)/H(+) exchanger in the trans-Golgi. Contributes to the regulation of pH regulation of Golgi apparatus, and consequently, in protein trafficking and endosomal morphology. In germ cells, plays a crucial role in acrosome biogenesis and sperm development, probably by playing a role in the fusion of the Golgi-derived vesicles that form the acrosomal cap. Can also be active at the cell surface of specialized cells. In the small intestine, at the cell membrane, plays a major physiological role in transepithelial absorption of Na(+) and regulates intracellular pH homeostasis of intestinal epithelial cells. Acts as an important regulator of mucosal integrity in the intestine and in the stomach, could mediate the pH fluctuation necessary for mucin exocytosis or assist membrane trafficking of other proteins. Plays a role in photoreceptor survival and in the maintenance of intracellular pH homeostasis in retinal pigment epithelium (RPE cells). The sequence is that of Sodium/hydrogen exchanger 8 (Slc9a8) from Rattus norvegicus (Rat).